Here is a 630-residue protein sequence, read N- to C-terminus: Plastin-3 (630 aa).

EF-hand domains follow at residues 12 to 47 (DELD…ANMP) and 52 to 87 (KVRE…VKSS). The Ca(2+) site is built by aspartate 25, asparagine 27, asparagine 29, glutamate 36, aspartate 65, asparagine 67, aspartate 69, lysine 71, and glutamate 76. Actin-binding regions lie at residues 109 to 382 (TSEL…ALTK) and 383 to 627 (PENQ…GRGM). Calponin-homology (CH) domains are found at residues 123-239 (EEEK…KIGL) and 267-378 (LSPE…NKYP). 4 positions are modified to phosphoserine: serine 268, serine 293, serine 326, and serine 339. Phosphothreonine is present on threonine 391. 2 consecutive Calponin-homology (CH) domains span residues 397 to 506 (TREE…RRYT) and 518 to 627 (KAND…GRGM).

In terms of assembly, monomer. As to expression, expressed in a variety of organs, including muscle, brain, uterus and esophagus.

The protein localises to the cytoplasm. Actin-bundling protein. In Homo sapiens (Human), this protein is Plastin-3 (PLS3).